We begin with the raw amino-acid sequence, 157 residues long: Ribosomal RNA large subunit methyltransferase H (157 aa).

Residues L73, G104, and L123–L128 contribute to the S-adenosyl-L-methionine site.

The protein belongs to the RNA methyltransferase RlmH family. In terms of assembly, homodimer.

It localises to the cytoplasm. The enzyme catalyses pseudouridine(1915) in 23S rRNA + S-adenosyl-L-methionine = N(3)-methylpseudouridine(1915) in 23S rRNA + S-adenosyl-L-homocysteine + H(+). In terms of biological role, specifically methylates the pseudouridine at position 1915 (m3Psi1915) in 23S rRNA. This is Ribosomal RNA large subunit methyltransferase H from Xylella fastidiosa (strain M12).